The sequence spans 342 residues: Photosystem II D2 protein (342 aa).

Over 1-29 (ERGWFDILDDWLKRDRFVFVGWSGILLFP) the chain is Cytoplasmic. Residues 30-50 (CAYLALGGWLTGTTFVTSWYT) form a helical membrane-spanning segment. Residues 51–113 (HGLASSYLEG…IALHGAFGLI (63 aa)) are Lumenal-facing. Histidine 107 provides a ligand contact to chlorophyll a. A helical transmembrane segment spans residues 114–130 (GFMLRQFEIARLVGVRP). Glutamine 119 and asparagine 132 together coordinate pheophytin a. The Cytoplasmic segment spans residues 131 to 141 (YNAIAFSAPIA). The chain crosses the membrane as a helical span at residues 142–155 (VFVSVFLIYPLGQS). Topologically, residues 156–196 (SWFFAPSFGVAAIFRFLLFFQGFHNWTLNPFHMMGVAGVLG) are lumenal. Histidine 187 contributes to the chlorophyll a binding site. Residues 197-217 (GALLCAIHGATVENTLFQDGE) traverse the membrane as a helical segment. Positions 204 and 251 each coordinate a plastoquinone. Residue histidine 204 coordinates Fe cation. Topologically, residues 218–267 (GASTFRAFNPTQAEETYSMVTANRFWSQIFGIAFSNKRWLHFFMLFVPVT) are cytoplasmic. Residue histidine 258 participates in Fe cation binding. Residues 268–284 (GLWMSAIGVVGLALNLR) traverse the membrane as a helical segment. Residues 285–342 (SYDFISQEIRAAEDPEFETFYTKNLLLNEGIRAWMAPQDQPHENFVFPEEVLPRGNAL) lie on the Lumenal side of the membrane.

This sequence belongs to the reaction center PufL/M/PsbA/D family. PSII is composed of 1 copy each of membrane proteins PsbA, PsbB, PsbC, PsbD, PsbE, PsbF, PsbH, PsbI, PsbJ, PsbK, PsbL, PsbM, PsbT, PsbX, PsbY, PsbZ, Psb30/Ycf12, peripheral proteins PsbO, CyanoQ (PsbQ), PsbU, PsbV and a large number of cofactors. It forms dimeric complexes. It depends on The D1/D2 heterodimer binds P680, chlorophylls that are the primary electron donor of PSII, and subsequent electron acceptors. It shares a non-heme iron and each subunit binds pheophytin, quinone, additional chlorophylls, carotenoids and lipids. There is also a Cl(-1) ion associated with D1 and D2, which is required for oxygen evolution. The PSII complex binds additional chlorophylls, carotenoids and specific lipids. as a cofactor.

The protein resides in the cellular thylakoid membrane. The catalysed reaction is 2 a plastoquinone + 4 hnu + 2 H2O = 2 a plastoquinol + O2. Functionally, photosystem II (PSII) is a light-driven water:plastoquinone oxidoreductase that uses light energy to abstract electrons from H(2)O, generating O(2) and a proton gradient subsequently used for ATP formation. It consists of a core antenna complex that captures photons, and an electron transfer chain that converts photonic excitation into a charge separation. The D1/D2 (PsbA/PsbD) reaction center heterodimer binds P680, the primary electron donor of PSII as well as several subsequent electron acceptors. D2 is needed for assembly of a stable PSII complex. This Thermostichus vulcanus (Synechococcus vulcanus) protein is Photosystem II D2 protein.